Consider the following 1859-residue polypeptide: DNA-directed RNA polymerase subunit beta'' (1859 aa).

Positions 286, 359, 366, and 369 each coordinate Zn(2+).

Belongs to the RNA polymerase beta' chain family. RpoC2 subfamily. As to quaternary structure, in plastids the minimal PEP RNA polymerase catalytic core is composed of four subunits: alpha, beta, beta', and beta''. When a (nuclear-encoded) sigma factor is associated with the core the holoenzyme is formed, which can initiate transcription. Zn(2+) serves as cofactor.

Its subcellular location is the plastid. It localises to the chloroplast. The enzyme catalyses RNA(n) + a ribonucleoside 5'-triphosphate = RNA(n+1) + diphosphate. Functionally, DNA-dependent RNA polymerase catalyzes the transcription of DNA into RNA using the four ribonucleoside triphosphates as substrates. The sequence is that of DNA-directed RNA polymerase subunit beta'' from Oltmannsiellopsis viridis (Marine flagellate).